Here is a 362-residue protein sequence, read N- to C-terminus: Glutamate 5-kinase (362 aa).

Lys-3 lines the ATP pocket. 3 residues coordinate substrate: Ser-43, Asp-128, and Asn-140. Residues 160-161 and 202-208 contribute to the ATP site; these read TD and TGGMRTK. The 82-residue stretch at 267-348 folds into the PUA domain; sequence AGAILVDAGA…RDIENVLGYS (82 aa).

Belongs to the glutamate 5-kinase family.

The protein resides in the cytoplasm. It catalyses the reaction L-glutamate + ATP = L-glutamyl 5-phosphate + ADP. It participates in amino-acid biosynthesis; L-proline biosynthesis; L-glutamate 5-semialdehyde from L-glutamate: step 1/2. Its function is as follows. Catalyzes the transfer of a phosphate group to glutamate to form L-glutamate 5-phosphate. The chain is Glutamate 5-kinase from Xanthomonas oryzae pv. oryzae (strain MAFF 311018).